We begin with the raw amino-acid sequence, 256 residues long: Imidazole glycerol phosphate synthase subunit HisF (256 aa).

Active-site residues include Asp11 and Asp130.

Belongs to the HisA/HisF family. In terms of assembly, heterodimer of HisH and HisF.

It localises to the cytoplasm. The enzyme catalyses 5-[(5-phospho-1-deoxy-D-ribulos-1-ylimino)methylamino]-1-(5-phospho-beta-D-ribosyl)imidazole-4-carboxamide + L-glutamine = D-erythro-1-(imidazol-4-yl)glycerol 3-phosphate + 5-amino-1-(5-phospho-beta-D-ribosyl)imidazole-4-carboxamide + L-glutamate + H(+). It participates in amino-acid biosynthesis; L-histidine biosynthesis; L-histidine from 5-phospho-alpha-D-ribose 1-diphosphate: step 5/9. In terms of biological role, IGPS catalyzes the conversion of PRFAR and glutamine to IGP, AICAR and glutamate. The HisF subunit catalyzes the cyclization activity that produces IGP and AICAR from PRFAR using the ammonia provided by the HisH subunit. This is Imidazole glycerol phosphate synthase subunit HisF from Prochlorococcus marinus (strain NATL2A).